Consider the following 233-residue polypeptide: 2,3-bisphosphoglycerate-dependent phosphoglycerate mutase (233 aa).

Substrate contacts are provided by residues arginine 8–asparagine 15, threonine 21–glycine 22, arginine 60, glutamate 87–tyrosine 90, lysine 98, arginine 114–arginine 115, and glycine 183–asparagine 184. Histidine 9 acts as the Tele-phosphohistidine intermediate in catalysis. The active-site Proton donor/acceptor is the glutamate 87.

Belongs to the phosphoglycerate mutase family. BPG-dependent PGAM subfamily.

It carries out the reaction (2R)-2-phosphoglycerate = (2R)-3-phosphoglycerate. Its pathway is carbohydrate degradation; glycolysis; pyruvate from D-glyceraldehyde 3-phosphate: step 3/5. Its function is as follows. Catalyzes the interconversion of 2-phosphoglycerate and 3-phosphoglycerate. The chain is 2,3-bisphosphoglycerate-dependent phosphoglycerate mutase from Lactococcus lactis subsp. cremoris (strain MG1363).